Reading from the N-terminus, the 122-residue chain is Small ribosomal subunit protein uS13 (122 aa).

Residues 99 to 122 (RGQRTHTNARTRKGPAKAIAGKKK) are disordered.

This sequence belongs to the universal ribosomal protein uS13 family. In terms of assembly, part of the 30S ribosomal subunit. Forms a loose heterodimer with protein S19. Forms two bridges to the 50S subunit in the 70S ribosome.

Functionally, located at the top of the head of the 30S subunit, it contacts several helices of the 16S rRNA. In the 70S ribosome it contacts the 23S rRNA (bridge B1a) and protein L5 of the 50S subunit (bridge B1b), connecting the 2 subunits; these bridges are implicated in subunit movement. Contacts the tRNAs in the A and P-sites. In Rhizobium leguminosarum bv. trifolii (strain WSM2304), this protein is Small ribosomal subunit protein uS13.